A 356-amino-acid polypeptide reads, in one-letter code: D-alanine--D-alanine ligase (356 aa).

Residues 146–350 enclose the ATP-grasp domain; it reads KKLLVAEGLP…YAELLDTLIQ (205 aa). An ATP-binding site is contributed by 173–228; that stretch reads KERLGLPVFVKPARGGSSIGVSKVSAWEDLEAALTLAYESDDKVLIEPEISGAEVE. Mg(2+) contacts are provided by Asp305, Glu317, and Asn319.

Belongs to the D-alanine--D-alanine ligase family. It depends on Mg(2+) as a cofactor. Mn(2+) is required as a cofactor.

Its subcellular location is the cytoplasm. The catalysed reaction is 2 D-alanine + ATP = D-alanyl-D-alanine + ADP + phosphate + H(+). The protein operates within cell wall biogenesis; peptidoglycan biosynthesis. Its function is as follows. Cell wall formation. The protein is D-alanine--D-alanine ligase of Corynebacterium aurimucosum (strain ATCC 700975 / DSM 44827 / CIP 107346 / CN-1) (Corynebacterium nigricans).